A 150-amino-acid polypeptide reads, in one-letter code: MAELLDRTDKMLLEELKKNARENIAALSKKLGIPRTTVHYRIKRLLEEGIIEKFTIKPNYKKLNLGTTAFVLIRYDPDSGLTQKEVAEQIAKIPGVYEVHIVAGEWDILLKVRAANAEEVGKIVIEKLREIKGVGQTVTMVSFVTIKEEI.

One can recognise an HTH asnC-type domain in the interval 5–66 (LDRTDKMLLE…KPNYKKLNLG (62 aa)). Positions 24-43 (IAALSKKLGIPRTTVHYRIK) form a DNA-binding region, H-T-H motif.

This is an uncharacterized protein from Pyrococcus furiosus (strain ATCC 43587 / DSM 3638 / JCM 8422 / Vc1).